The following is a 227-amino-acid chain: Small ribosomal subunit protein uS3 (227 aa).

Residues 38–106 (LRKYLREKLA…EVHLNIVEIR (69 aa)) form the KH type-2 domain.

It belongs to the universal ribosomal protein uS3 family. In terms of assembly, part of the 30S ribosomal subunit. Forms a tight complex with proteins S10 and S14.

Binds the lower part of the 30S subunit head. Binds mRNA in the 70S ribosome, positioning it for translation. The chain is Small ribosomal subunit protein uS3 from Paramagnetospirillum magneticum (strain ATCC 700264 / AMB-1) (Magnetospirillum magneticum).